We begin with the raw amino-acid sequence, 603 residues long: DNA mismatch repair protein MutL (603 aa).

A disordered region spans residues 361–383; sequence KETPTLFSKPTIPEYVPSDEDAP.

This sequence belongs to the DNA mismatch repair MutL/HexB family.

Its function is as follows. This protein is involved in the repair of mismatches in DNA. It is required for dam-dependent methyl-directed DNA mismatch repair. May act as a 'molecular matchmaker', a protein that promotes the formation of a stable complex between two or more DNA-binding proteins in an ATP-dependent manner without itself being part of a final effector complex. The polypeptide is DNA mismatch repair protein MutL (Listeria monocytogenes serotype 4b (strain CLIP80459)).